We begin with the raw amino-acid sequence, 281 residues long: Inositol diphosphatase SIW14 (281 aa).

Positions 1–20 (MGLYQAKNDEGSDPKSSSKI) are disordered. Over residues 7–20 (KNDEGSDPKSSSKI) the composition is skewed to basic and acidic residues. Phosphoserine is present on Ser-94. The Tyrosine-protein phosphatase domain occupies 121–271 (NFSHVVGEIY…YDDDEIKRIA (151 aa)). Residues Asn-189, Ile-190, and His-193 each contribute to the 1D-myo-inositol hexakisphosphate site. Residue Cys-214 is the Phosphocysteine intermediate of the active site.

It belongs to the protein-tyrosine phosphatase family. Atypical dual-specificity phosphatase Siw14-like subfamily. As to quaternary structure, monomer.

Its subcellular location is the cytoplasm. It catalyses the reaction 5-diphospho-1D-myo-inositol 1,2,3,4,6-pentakisphosphate + H2O = 1D-myo-inositol hexakisphosphate + phosphate + H(+). The enzyme catalyses 5-diphospho-1D-myo-inositol 1,3,4,6-tetrakisphosphate + H2O = 1D-myo-inositol 1,3,4,5,6-pentakisphosphate + phosphate + H(+). The catalysed reaction is 3,5-bis(diphospho)-1D-myo-inositol 1,2,4,6-tetrakisphosphate + H2O = 3-diphospho-1D-myo-inositol 1,2,4,5,6-pentakisphosphate + phosphate + 2 H(+). It carries out the reaction 1,5-bis(diphospho)-1D-myo-inositol 2,3,4,6-tetrakisphosphate + H2O = 1-diphospho-1D-myo-inositol 2,3,4,5,6-pentakisphosphate + phosphate + 2 H(+). It catalyses the reaction 6-diphospho-1D-myo-inositol pentakisphosphate + H2O = 1D-myo-inositol hexakisphosphate + phosphate + H(+). Functionally, selectively cleaves the beta-phosphate at the 5-position of soluble inositol pyrophosphates. Converts 5-diphosphoinositol tetrakisphosphate (5-PP-InsP(4)) into inositol pentakisphosphate (InsP(5)), 5-diphosphoinositol pentakisphosphate (5-PP-IP(5) or 5-InsP(7)) into inositol hexakisphosphate (IP(6) or InsP(6)), and 1,5-bisdiphosphoinositol tetrakisphosphate (1,5-PP-IP(5) or InsP(8)) into 1-diphosphoinositol pentakisphosphate (1-PP-IP(5) or 1-InsP(7)). Also has activity on 1,5-bis-diphosphoinositol 2,3,4,6-tetrakisphosphate (1,5-InsP(8)) and 3,5-InsP(8). Modulates inositol pyrophosphate metabolism that may have an influence in stress response. Plays a role in actin filament organization and endocytosis. Functions as a prion suppressing factor possibly due to its phosphatase activity against inositol pyrophosphates, which are signal transduction molecules involved in prion propagation. The polypeptide is Inositol diphosphatase SIW14 (SIW14) (Saccharomyces cerevisiae (strain ATCC 204508 / S288c) (Baker's yeast)).